A 283-amino-acid chain; its full sequence is Phosphatidylserine decarboxylase proenzyme (283 aa).

Catalysis depends on charge relay system; for autoendoproteolytic cleavage activity residues Asp89, His146, and Ser249. Ser249 acts as the Schiff-base intermediate with substrate; via pyruvic acid; for decarboxylase activity in catalysis. Ser249 is modified (pyruvic acid (Ser); by autocatalysis).

It belongs to the phosphatidylserine decarboxylase family. PSD-B subfamily. Prokaryotic type I sub-subfamily. Heterodimer of a large membrane-associated beta subunit and a small pyruvoyl-containing alpha subunit. The cofactor is pyruvate. In terms of processing, is synthesized initially as an inactive proenzyme. Formation of the active enzyme involves a self-maturation process in which the active site pyruvoyl group is generated from an internal serine residue via an autocatalytic post-translational modification. Two non-identical subunits are generated from the proenzyme in this reaction, and the pyruvate is formed at the N-terminus of the alpha chain, which is derived from the carboxyl end of the proenzyme. The autoendoproteolytic cleavage occurs by a canonical serine protease mechanism, in which the side chain hydroxyl group of the serine supplies its oxygen atom to form the C-terminus of the beta chain, while the remainder of the serine residue undergoes an oxidative deamination to produce ammonia and the pyruvoyl prosthetic group on the alpha chain. During this reaction, the Ser that is part of the protease active site of the proenzyme becomes the pyruvoyl prosthetic group, which constitutes an essential element of the active site of the mature decarboxylase.

The protein localises to the cell membrane. The catalysed reaction is a 1,2-diacyl-sn-glycero-3-phospho-L-serine + H(+) = a 1,2-diacyl-sn-glycero-3-phosphoethanolamine + CO2. It functions in the pathway phospholipid metabolism; phosphatidylethanolamine biosynthesis; phosphatidylethanolamine from CDP-diacylglycerol: step 2/2. In terms of biological role, catalyzes the formation of phosphatidylethanolamine (PtdEtn) from phosphatidylserine (PtdSer). This chain is Phosphatidylserine decarboxylase proenzyme, found in Legionella pneumophila subsp. pneumophila (strain Philadelphia 1 / ATCC 33152 / DSM 7513).